We begin with the raw amino-acid sequence, 219 residues long: Small ribosomal subunit protein uS3 (219 aa).

The 70-residue stretch at Ile-38–Lys-107 folds into the KH type-2 domain.

It belongs to the universal ribosomal protein uS3 family. As to quaternary structure, part of the 30S ribosomal subunit. Forms a tight complex with proteins S10 and S14.

Binds the lower part of the 30S subunit head. Binds mRNA in the 70S ribosome, positioning it for translation. The chain is Small ribosomal subunit protein uS3 from Exiguobacterium sp. (strain ATCC BAA-1283 / AT1b).